A 351-amino-acid polypeptide reads, in one-letter code: Rhodopsin (351 aa).

The Extracellular portion of the chain corresponds to Met-1–Ala-36. Asn-2 and Asn-15 each carry an N-linked (GlcNAc...) asparagine glycan. Residues Phe-37 to Val-61 traverse the membrane as a helical segment. Residues Thr-62–Asn-73 are Cytoplasmic-facing. The chain crosses the membrane as a helical span at residues Tyr-74–Tyr-96. At Ser-97–Cys-110 the chain is on the extracellular side. Cys-110 and Cys-187 form a disulfide bridge. Residues Asn-111–Ile-133 traverse the membrane as a helical segment. A 'Ionic lock' involved in activated form stabilization motif is present at residues Glu-134–Trp-136. The Cytoplasmic portion of the chain corresponds to Glu-134–His-152. The helical transmembrane segment at Ala-153–Val-173 threads the bilayer. Residues Gly-174–Ser-202 lie on the Extracellular side of the membrane. N-linked (GlcNAc...) asparagine glycosylation occurs at Asn-200. Residues Phe-203–Gly-224 traverse the membrane as a helical segment. Residues Arg-225–Arg-252 lie on the Cytoplasmic side of the membrane. A helical membrane pass occupies residues Met-253–Phe-274. Residues Ile-275–Leu-286 lie on the Extracellular side of the membrane. Residues Phe-287–Cys-308 form a helical membrane-spanning segment. Lys-296 is subject to N6-(retinylidene)lysine. The Cytoplasmic portion of the chain corresponds to Met-309–Ala-351. Cys-323 carries S-palmitoyl cysteine lipidation. The interval Gly-330–Ala-351 is disordered. Low complexity predominate over residues Ala-335 to Ala-351.

The protein belongs to the G-protein coupled receptor 1 family. Opsin subfamily. In terms of processing, phosphorylated on some or all of the serine and threonine residues present in the C-terminal region. Contains one covalently linked retinal chromophore.

The protein localises to the membrane. Its subcellular location is the cell projection. The protein resides in the cilium. It is found in the photoreceptor outer segment. Photoreceptor required for image-forming vision at low light intensity. While most salt water fish species use retinal as chromophore, most freshwater fish use 3-dehydroretinal, or a mixture of retinal and 3-dehydroretinal. Light-induced isomerization of 11-cis to all-trans retinal triggers a conformational change that activates signaling via G-proteins. Subsequent receptor phosphorylation mediates displacement of the bound G-protein alpha subunit by arrestin and terminates signaling. The protein is Rhodopsin (rho) of Neoniphon sammara (Spotfin squirrelfish).